The primary structure comprises 302 residues: Putative T-box protein 34 (302 aa).

A DNA-binding region (T-box) is located at residues I5–Q180.

It is found in the nucleus. This Caenorhabditis elegans protein is Putative T-box protein 34 (tbx-34).